The sequence spans 514 residues: UDP-N-acetylmuramyl-tripeptide synthetase (514 aa).

2 residues coordinate UDP-N-acetyl-alpha-D-muramoyl-L-alanyl-D-glutamate: Leu44 and Ser46. Position 129–135 (129–135 (GTNGKTS)) interacts with ATP. Residues 171–172 (TT), Ser198, and Arg206 contribute to the UDP-N-acetyl-alpha-D-muramoyl-L-alanyl-D-glutamate site. Lys238 is subject to N6-carboxylysine.

It belongs to the MurCDEF family. MurE subfamily. In terms of processing, carboxylation is probably crucial for Mg(2+) binding and, consequently, for the gamma-phosphate positioning of ATP.

Its subcellular location is the cytoplasm. The protein operates within cell wall biogenesis; peptidoglycan biosynthesis. In terms of biological role, catalyzes the addition of an amino acid to the nucleotide precursor UDP-N-acetylmuramoyl-L-alanyl-D-glutamate (UMAG) in the biosynthesis of bacterial cell-wall peptidoglycan. The chain is UDP-N-acetylmuramyl-tripeptide synthetase from Leifsonia xyli subsp. xyli (strain CTCB07).